Here is a 92-residue protein sequence, read N- to C-terminus: Small ribosomal subunit protein uS19c (92 aa).

This sequence belongs to the universal ribosomal protein uS19 family.

It localises to the plastid. It is found in the chloroplast. Protein S19 forms a complex with S13 that binds strongly to the 16S ribosomal RNA. This is Small ribosomal subunit protein uS19c from Lobularia maritima (Sweet alyssum).